Consider the following 329-residue polypeptide: Protein Brevis radix-like 4 (329 aa).

The disordered stretch occupies residues 12-37 (SGTSRHHGQQRRGGSPPPRGRTTSVY). Residues 86–142 (REWVAQVEPGVQITFVSLAGGGGNDLKRIRFSREMYDKWQAQKWWGENNERIMELYN) enclose the BRX 1 domain. A disordered region spans residues 151 to 263 (LPTPPRSDDG…TTSCSSRDEV (113 aa)). Low complexity-rich tracts occupy residues 222–236 (SNPS…QQPQ) and 243–252 (AAASDAMDAA). Residues 253 to 263 (RTTSCSSRDEV) are compositionally biased toward polar residues. In terms of domain architecture, BRX 2 spans 274–329 (TEWVIQDEPGVYITVRELADGTRELRRVRFSRERFAELNAKLWWEENKERIQAQYL).

It belongs to the BRX family.

The protein resides in the nucleus. In Oryza sativa subsp. japonica (Rice), this protein is Protein Brevis radix-like 4 (BRXL4).